The primary structure comprises 174 residues: Ribosome maturation factor RimM (174 aa).

The 74-residue stretch at 98–171 (EDEYYFHEII…TIKIHIMEGL (74 aa)) folds into the PRC barrel domain.

Belongs to the RimM family. As to quaternary structure, binds ribosomal protein uS19.

Its subcellular location is the cytoplasm. Its function is as follows. An accessory protein needed during the final step in the assembly of 30S ribosomal subunit, possibly for assembly of the head region. Essential for efficient processing of 16S rRNA. May be needed both before and after RbfA during the maturation of 16S rRNA. It has affinity for free ribosomal 30S subunits but not for 70S ribosomes. The protein is Ribosome maturation factor RimM of Bacillus licheniformis (strain ATCC 14580 / DSM 13 / JCM 2505 / CCUG 7422 / NBRC 12200 / NCIMB 9375 / NCTC 10341 / NRRL NRS-1264 / Gibson 46).